We begin with the raw amino-acid sequence, 352 residues long: Fatty acid synthase (352 aa).

The region spanning 1-352 is the Ketosynthase family 3 (KS3) domain; sequence MEDVVIAGIA…KVVLSLEHGL (352 aa). Active-site for beta-ketoacyl synthase activity residues include Cys161, His293, and His331.

As to quaternary structure, homodimer which monomers are arranged in a head to tail fashion.

It carries out the reaction acetyl-CoA + n malonyl-CoA + 2n NADPH + 2n H(+) = a long-chain fatty acid + (n+1) CoA + n CO2 + 2n NADP(+).. Its function is as follows. Fatty acid synthetase catalyzes the formation of long-chain fatty acids from acetyl-CoA, malonyl-CoA and NADPH. This multifunctional protein has 7 catalytic activities as an acyl carrier protein. The chain is Fatty acid synthase (FASN) from Anser anser anser (Western greylag goose).